The primary structure comprises 458 residues: Light-independent protochlorophyllide reductase subunit N (458 aa).

[4Fe-4S] cluster is bound by residues C22, C47, and C107.

This sequence belongs to the BchN/ChlN family. As to quaternary structure, protochlorophyllide reductase is composed of three subunits; ChlL, ChlN and ChlB. Forms a heterotetramer of two ChlB and two ChlN subunits. Requires [4Fe-4S] cluster as cofactor.

The protein localises to the plastid. It is found in the chloroplast. The enzyme catalyses chlorophyllide a + oxidized 2[4Fe-4S]-[ferredoxin] + 2 ADP + 2 phosphate = protochlorophyllide a + reduced 2[4Fe-4S]-[ferredoxin] + 2 ATP + 2 H2O. It participates in porphyrin-containing compound metabolism; chlorophyll biosynthesis (light-independent). Its function is as follows. Component of the dark-operative protochlorophyllide reductase (DPOR) that uses Mg-ATP and reduced ferredoxin to reduce ring D of protochlorophyllide (Pchlide) to form chlorophyllide a (Chlide). This reaction is light-independent. The NB-protein (ChlN-ChlB) is the catalytic component of the complex. The protein is Light-independent protochlorophyllide reductase subunit N of Chaetosphaeridium globosum (Charophycean green alga).